An 89-amino-acid polypeptide reads, in one-letter code: Putative RING finger protein 121R (89 aa).

Residues 45-78 (CPICLIAKVNTVLECTHVLCSNCVKKINVCPICR) form an RING-type zinc finger.

This is Putative RING finger protein 121R from Invertebrate iridescent virus 6 (IIV-6).